A 154-amino-acid polypeptide reads, in one-letter code: uncharacterized protein (154 aa).

Positions 4, 7, 16, 19, 24, 28, 32, and 36 each coordinate Zn(2+). Residues 4–36 (CSICNESEIKYKCPKCSFPYCSLPCWKIHQSQC) form an HIT-type zinc finger.

This is an uncharacterized protein from Schizosaccharomyces pombe (strain 972 / ATCC 24843) (Fission yeast).